A 200-amino-acid chain; its full sequence is TATA-box-binding protein (200 aa).

2 repeat units span residues 25–101 (LQNI…ARII) and 115–192 (IQNI…YPVL).

Belongs to the TBP family. As to quaternary structure, belongs to the TFIID complex together with the TBP-associated factors (TAFs). Binds DNA as monomer.

The protein localises to the nucleus. Functionally, general transcription factor that functions at the core of the DNA-binding multiprotein factor TFIID. Binding of TFIID to the TATA box is the initial transcriptional step of the pre-initiation complex (PIC), playing a role in the activation of eukaryotic genes transcribed by RNA polymerase II. In Mesembryanthemum crystallinum (Common ice plant), this protein is TATA-box-binding protein.